Consider the following 333-residue polypeptide: DNA-directed RNA polymerase subunit alpha (333 aa).

Positions 1–235 are alpha N-terminal domain (alpha-NTD); sequence MQTNLLKPKA…EQLAVFAQLE (235 aa). An alpha C-terminal domain (alpha-CTD) region spans residues 253–333; it reads FDPILLRPVD…NWPPQGLDKR (81 aa).

It belongs to the RNA polymerase alpha chain family. Homodimer. The RNAP catalytic core consists of 2 alpha, 1 beta, 1 beta' and 1 omega subunit. When a sigma factor is associated with the core the holoenzyme is formed, which can initiate transcription.

The enzyme catalyses RNA(n) + a ribonucleoside 5'-triphosphate = RNA(n+1) + diphosphate. DNA-dependent RNA polymerase catalyzes the transcription of DNA into RNA using the four ribonucleoside triphosphates as substrates. In Methylibium petroleiphilum (strain ATCC BAA-1232 / LMG 22953 / PM1), this protein is DNA-directed RNA polymerase subunit alpha.